Consider the following 270-residue polypeptide: Sulfur carrier protein FdhD (270 aa).

The active-site Cysteine persulfide intermediate is the Cys108. Position 247-252 (247-252 (FIRDGR)) interacts with Mo-bis(molybdopterin guanine dinucleotide).

Belongs to the FdhD family.

Its subcellular location is the cytoplasm. Functionally, required for formate dehydrogenase (FDH) activity. Acts as a sulfur carrier protein that transfers sulfur from IscS to the molybdenum cofactor prior to its insertion into FDH. The protein is Sulfur carrier protein FdhD of Halalkalibacterium halodurans (strain ATCC BAA-125 / DSM 18197 / FERM 7344 / JCM 9153 / C-125) (Bacillus halodurans).